The chain runs to 311 residues: MATLIDADLLTAIVTPFDENNKIDFSSLEKLVNYLIGQGCNGFVVGGTTGETPTLTHDEKIDLYKHFSQFVNKRVPIIAGTGSNNTAETIAFTNEVAQIEGIDYALIVVPPYNKPNQRSMVAHFSAINDATKIPFLIYNIPGRTGVKMEKETIVQLSRLDNIKGIKQCASLEEMEYIIENKDPDFQVFTGEDTQALTARLLGANGVISVASHIYANQMRRMYDSLYEGNYPLAAKIQRWLTPRMQALFMYPSPAPVKAVLNAQGLNVGGCRLPLVELNDEEKITLAQRLGLDDNALMQKLPLDLGKELEDD.

Threonine 49 serves as a coordination point for pyruvate. The active-site Proton donor/acceptor is tyrosine 138. Lysine 166 (schiff-base intermediate with substrate) is an active-site residue. Isoleucine 207 lines the pyruvate pocket.

This sequence belongs to the DapA family. Homotetramer; dimer of dimers.

It is found in the cytoplasm. It carries out the reaction L-aspartate 4-semialdehyde + pyruvate = (2S,4S)-4-hydroxy-2,3,4,5-tetrahydrodipicolinate + H2O + H(+). It participates in amino-acid biosynthesis; L-lysine biosynthesis via DAP pathway; (S)-tetrahydrodipicolinate from L-aspartate: step 3/4. Functionally, catalyzes the condensation of (S)-aspartate-beta-semialdehyde [(S)-ASA] and pyruvate to 4-hydroxy-tetrahydrodipicolinate (HTPA). The protein is 4-hydroxy-tetrahydrodipicolinate synthase of Lactobacillus acidophilus (strain ATCC 700396 / NCK56 / N2 / NCFM).